Consider the following 168-residue polypeptide: Variant surface antigen D (168 aa).

A signal peptide spans 1–29; it reads MKKSIFSKKLLVSFGSLVTLAAIPLIAIS. Cys-30 is lipidated: N-palmitoyl cysteine. Cys-30 carries S-diacylglycerol cysteine lipidation. The segment at 33–168 is disordered; it reads TNTDQSQQPG…STSTSNMNTR (136 aa). Low complexity-rich tracts occupy residues 35-44 and 52-71; these read TDQSQQPGSG and GTTT…ESGT. Residues 72 to 81 show a composition bias toward gly residues; it reads TTGGQTGTTT. 7 tandem repeats follow at residues 81-92, 93-104, 105-116, 117-128, 129-140, 141-152, and 153-164. The tract at residues 81 to 164 is 7 X 12 AA tandem repeats; sequence TGGQSDSTST…GSSDSTSTSN (84 aa). Positions 82–168 are enriched in low complexity; it reads GGQSDSTSTS…STSTSNMNTR (87 aa).

It localises to the cell membrane. Responsible for the antigenic diversity for host adaptation. Expression in E.coli of a construct containing vlpD, vlpE, and vlpF yields antigenically distinguishable products corresponding to each gene. The chain is Variant surface antigen D (vlpD) from Mesomycoplasma hyorhinis (Mycoplasma hyorhinis).